A 147-amino-acid chain; its full sequence is MKALIILGFLFLSVAVQGKVFERCELARTLKKLGLDGYKGVSLANWLCLTKWESSYNTKATNYNPGSESTDYGIFQINSKWWCNDGKTPNAVDGCHVSCSELMENDIAKAVACAKQIVSEQGITAWVAWKSHCRDHDVSSYVEGCTL.

The N-terminal stretch at 1–18 (MKALIILGFLFLSVAVQG) is a signal peptide. A C-type lysozyme domain is found at 19–147 (KVFERCELAR…VSSYVEGCTL (129 aa)). Disulfide bonds link Cys-24–Cys-145, Cys-48–Cys-133, Cys-83–Cys-99, and Cys-95–Cys-113. Catalysis depends on residues Glu-53 and Asp-71.

Belongs to the glycosyl hydrolase 22 family. In terms of assembly, monomer. In terms of tissue distribution, stomach-specific.

It carries out the reaction Hydrolysis of (1-&gt;4)-beta-linkages between N-acetylmuramic acid and N-acetyl-D-glucosamine residues in a peptidoglycan and between N-acetyl-D-glucosamine residues in chitodextrins.. Its function is as follows. Lysozymes have primarily a bacteriolytic function; those in tissues and body fluids are associated with the monocyte-macrophage system and enhance the activity of immunoagents. This Bos taurus (Bovine) protein is Lysozyme C-1 (LYZ1).